The following is a 384-amino-acid chain: MGSKKLKRVGLSQELCDRLSRHQILTCQDFLCLSPLELMKVTGLSYRGVHELLCMVSRACAPKMQTAYGIKAQRSADFSPAFLSTTLSALDEALHGGVACGSLTEITGPPGCGKTQFCIMMSILATLPTNMGGLEGAVVYIDTESAFSAERLVEIAESRFPRYFNTEEKLLLTSSKVHLYRELTCDEVLQRIESLEEEIISKGIKLVILDSVASVVRKEFDAQLQGNLKERNKFLAREASSLKYLAEEFSIPVILTNQITTHLSGALASQADLVSPADDLSLSEGTSGSSCVIAALGNTWSHSVNTRLILQYLDSERRQILIAKSPLAPFTSFVYTIKEEGLVLQETTFCSVTQAELNWAPEILPPQPPEQLGLQMCHHTQLIF.

The tract at residues 1-75 (MGSKKLKRVG…TAYGIKAQRS (75 aa)) is interaction with RAD51C. 108–115 (GPPGCGKT) serves as a coordination point for ATP.

This sequence belongs to the RecA family. RAD51 subfamily. In terms of assembly, part of the BCDX2 complex consisting of RAD51B, RAD51C, RAD51D and XRCC2; the complex has a ring-like structure arranged into a flat disc around a central channel. The BCDX2 subcomplex RAD51B:RAD51C interacts with RAD51. Interacts with SWSAP1; involved in homologous recombination repair. Interacts with HELQ. Phosphorylated on tyrosine residues by BCR-ABL. In terms of tissue distribution, expressed in a wide range of tissues.

Its subcellular location is the nucleus. In terms of biological role, involved in the homologous recombination repair (HRR) pathway of double-stranded DNA breaks arising during DNA replication or induced by DNA-damaging agents. May promote the assembly of presynaptic RAD51 nucleoprotein filaments. Binds single-stranded DNA and double-stranded DNA and has DNA-dependent ATPase activity. Part of the RAD51 paralog protein complex BCDX2 which acts in the BRCA1-BRCA2-dependent HR pathway. Upon DNA damage, BCDX2 acts downstream of BRCA2 recruitment and upstream of RAD51 recruitment. BCDX2 binds predominantly to the intersection of the four duplex arms of the Holliday junction and to junction of replication forks. The BCDX2 complex was originally reported to bind single-stranded DNA, single-stranded gaps in duplex DNA and specifically to nicks in duplex DNA. The BCDX2 subcomplex RAD51B:RAD51C exhibits single-stranded DNA-dependent ATPase activity suggesting an involvement in early stages of the HR pathway. This is DNA repair protein RAD51 homolog 2 (RAD51B) from Homo sapiens (Human).